The chain runs to 867 residues: Glutamate receptor 1.2 (867 aa).

The signal sequence occupies residues 1 to 27 (MVRICIQTPILLSFLLVLLFFISNCFA). The Extracellular segment spans residues 28–560 (SSQNNDDDKR…SMWVFFQPLT (533 aa)). N-linked (GlcNAc...) asparagine glycosylation is found at asparagine 301, asparagine 400, asparagine 496, and asparagine 499. The helical transmembrane segment at 561 to 581 (PNLWITSAAFFVLTGIIVWLI) threads the bilayer. Residues 582–590 (ERAENKEFQ) lie on the Cytoplasmic side of the membrane. The chain crosses the membrane as a helical span at residues 591-611 (GSWPQQIGVVIWFGFSTLVYA). Residues 612–622 (HREKLQHNLSR) are Cytoplasmic-facing. Residues 623–643 (FVVTVWVFAVLILVTSYTATL) form a helical membrane-spanning segment. Residues 644–792 (TSMMTVQQIR…NPITLYRFRG (149 aa)) lie on the Extracellular side of the membrane. Asparagine 676, asparagine 688, asparagine 699, and asparagine 748 each carry an N-linked (GlcNAc...) asparagine glycan. Residues 793 to 813 (LFMITGVSFAFALAVLLILWL) traverse the membrane as a helical segment. Residues 814–867 (RERWEILVNSVNIYFSQRLRHFRILFTRTIHPSPLGLDNPIGENAVQMAQRNRR) are Cytoplasmic-facing.

The protein belongs to the glutamate-gated ion channel (TC 1.A.10.1) family. May form heteromers. Expressed predominantly in roots and siliques.

The protein localises to the membrane. Glutamate-gated receptor that probably acts as a non-selective cation channel. May be involved in light-signal transduction and calcium homeostasis via the regulation of calcium influx into cells. In Arabidopsis thaliana (Mouse-ear cress), this protein is Glutamate receptor 1.2 (GLR1.2).